A 96-amino-acid chain; its full sequence is Co-chaperonin GroES (96 aa).

It belongs to the GroES chaperonin family. Heptamer of 7 subunits arranged in a ring. Interacts with the chaperonin GroEL.

The protein resides in the cytoplasm. Together with the chaperonin GroEL, plays an essential role in assisting protein folding. The GroEL-GroES system forms a nano-cage that allows encapsulation of the non-native substrate proteins and provides a physical environment optimized to promote and accelerate protein folding. GroES binds to the apical surface of the GroEL ring, thereby capping the opening of the GroEL channel. This chain is Co-chaperonin GroES, found in Cupriavidus taiwanensis (strain DSM 17343 / BCRC 17206 / CCUG 44338 / CIP 107171 / LMG 19424 / R1) (Ralstonia taiwanensis (strain LMG 19424)).